The primary structure comprises 146 residues: Hemoglobin subunit beta-2 (146 aa).

Positions 2-146 (HWTAEEKQLI…VAHALARRYH (145 aa)) constitute a Globin domain. Heme b is bound by residues His63 and His92.

The protein belongs to the globin family. In terms of assembly, heterotetramer of two alpha chains and two beta chains. In terms of tissue distribution, red blood cells.

Its function is as follows. Involved in oxygen transport from the lung to the various peripheral tissues. The polypeptide is Hemoglobin subunit beta-2 (Iguana iguana (Common iguana)).